Here is a 181-residue protein sequence, read N- to C-terminus: Avenin-like a6 (181 aa).

The N-terminal stretch at 1-19 is a signal peptide; the sequence is MKNLFILALLAFTATSAVA.

It belongs to the prolamin family. Contains 7 disulfide bonds.

Seed storage protein. Not integrated in the gluten polymer through disulfide bonds, unless incorporated by reduction and reoxidation during dough making. Increases dough strength and bread volume, but decreases dough stability when added into a base wheat flour. This Triticum aestivum (Wheat) protein is Avenin-like a6.